We begin with the raw amino-acid sequence, 176 residues long: Large ribosomal subunit protein uL6 (176 aa).

The protein belongs to the universal ribosomal protein uL6 family. As to quaternary structure, part of the 50S ribosomal subunit.

Functionally, this protein binds to the 23S rRNA, and is important in its secondary structure. It is located near the subunit interface in the base of the L7/L12 stalk, and near the tRNA binding site of the peptidyltransferase center. This is Large ribosomal subunit protein uL6 from Shewanella sediminis (strain HAW-EB3).